Here is a 675-residue protein sequence, read N- to C-terminus: DNA ligase 1 (675 aa).

NAD(+) contacts are provided by residues 34-38, 83-84, and glutamate 114; these read DFEYD and SL. Residue lysine 116 is the N6-AMP-lysine intermediate of the active site. NAD(+) contacts are provided by arginine 137, glutamate 177, lysine 295, and lysine 319. Zn(2+) contacts are provided by cysteine 413, cysteine 416, cysteine 431, and cysteine 436. One can recognise a BRCT domain in the interval 596-675; sequence NSGSALAGKT…AEFLRLLSGG (80 aa).

It belongs to the NAD-dependent DNA ligase family. LigA subfamily. It depends on Mg(2+) as a cofactor. Requires Mn(2+) as cofactor.

The enzyme catalyses NAD(+) + (deoxyribonucleotide)n-3'-hydroxyl + 5'-phospho-(deoxyribonucleotide)m = (deoxyribonucleotide)n+m + AMP + beta-nicotinamide D-nucleotide.. Its function is as follows. DNA ligase that catalyzes the formation of phosphodiester linkages between 5'-phosphoryl and 3'-hydroxyl groups in double-stranded DNA using NAD as a coenzyme and as the energy source for the reaction. It is essential for DNA replication and repair of damaged DNA. The protein is DNA ligase 1 of Opitutus terrae (strain DSM 11246 / JCM 15787 / PB90-1).